The chain runs to 377 residues: MKFEKLGQSGRARRGRLTLEHGVVETPVFMPVGTYGTVKGMLPRDIEDIQAQIILGNTFHLYLRPGLEVIKQHGGLHDFIKWNKPILTDSGGFQVFSLGAMRKIKEEGVTFRSPIDGSKVFLSPEISMEIQHVLNSDIVMIFDECTPYPATHEEAQKSLQLSLRWAKRCKTHHHDELKNKNALFGIIQGGMYEDLRDESLNGLLEIGFDGYAIGGLSVGEPKEEMIKVLDYLPNKMPHDKPRYLMGVGKPEDIVEAVRRGVDMFDCVMPTRNARNGHYFVTDGLVRIRNSKYRHDQGPLDPHCDCYTCKNFTRAYLFHLEKCGEMLASMLGTIHNLRYYQRLTEGMRDALDNGTFDEFVQDFYARRGLEVPPCPVDE.

Residue aspartate 89 is the Proton acceptor of the active site. Residues 89 to 93 (DSGGF), aspartate 143, glutamine 188, and glycine 215 each bind substrate. Residues 246-252 (GVGKPED) are RNA binding. Aspartate 265 serves as the catalytic Nucleophile. An RNA binding; important for wobble base 34 recognition region spans residues 270–274 (TRNAR). Zn(2+) contacts are provided by cysteine 303, cysteine 305, cysteine 308, and histidine 334.

Belongs to the queuine tRNA-ribosyltransferase family. Homodimer. Within each dimer, one monomer is responsible for RNA recognition and catalysis, while the other monomer binds to the replacement base PreQ1. Requires Zn(2+) as cofactor.

The enzyme catalyses 7-aminomethyl-7-carbaguanine + guanosine(34) in tRNA = 7-aminomethyl-7-carbaguanosine(34) in tRNA + guanine. It functions in the pathway tRNA modification; tRNA-queuosine biosynthesis. Catalyzes the base-exchange of a guanine (G) residue with the queuine precursor 7-aminomethyl-7-deazaguanine (PreQ1) at position 34 (anticodon wobble position) in tRNAs with GU(N) anticodons (tRNA-Asp, -Asn, -His and -Tyr). Catalysis occurs through a double-displacement mechanism. The nucleophile active site attacks the C1' of nucleotide 34 to detach the guanine base from the RNA, forming a covalent enzyme-RNA intermediate. The proton acceptor active site deprotonates the incoming PreQ1, allowing a nucleophilic attack on the C1' of the ribose to form the product. After dissociation, two additional enzymatic reactions on the tRNA convert PreQ1 to queuine (Q), resulting in the hypermodified nucleoside queuosine (7-(((4,5-cis-dihydroxy-2-cyclopenten-1-yl)amino)methyl)-7-deazaguanosine). In Acinetobacter baumannii (strain ACICU), this protein is Queuine tRNA-ribosyltransferase.